Reading from the N-terminus, the 501-residue chain is G protein-activated inward rectifier potassium channel 1 (501 aa).

The tract at residues 1 to 40 (MSALRRKFGDDYQVVTTSSSGSGLQPQGPGQGPQQQLVPK) is disordered. Topologically, residues 1–80 (MSALRRKFGD…LFTTLVDLKW (80 aa)) are cytoplasmic. The segment covering 18–37 (SSSGSGLQPQGPGQGPQQQL) has biased composition (low complexity). A helical membrane pass occupies residues 81 to 105 (RWNLFIFILTYTVAWLFMASMWWVI). At 106 to 129 (AYTRGDLNKAHVGNYTPCVANVYN) the chain is on the extracellular side. N-linked (GlcNAc...) asparagine glycosylation occurs at N119. The helical; Pore-forming intramembrane region spans 130 to 141 (FPSAFLFFIETE). An intramembrane region (pore-forming) is located at residues 142–148 (ATIGYGY). The Selectivity filter signature appears at 143-148 (TIGYGY). At 149–157 (RYITDKCPE) the chain is on the extracellular side. The chain crosses the membrane as a helical span at residues 158–179 (GIILFLFQSILGSIVDAFLIGC). The Cytoplasmic segment spans residues 180–501 (MFIKMSQPKK…LRKMNSDRFT (322 aa)). Positions 182-209 (IKMSQPKKRAETLMFSEHAVISMRDGKL) are polyphosphoinositide (PIP2)-binding. A phosphoserine mark is found at S385 and S424. Positions 456–467 (TKMLSDPMSQSV) are enriched in polar residues. Positions 456–501 (TKMLSDPMSQSVADLPPKLQKMAGGPTRMEGNLPAKLRKMNSDRFT) are disordered.

It belongs to the inward rectifier-type potassium channel (TC 1.A.2.1) family. KCNJ3 subfamily. Associates with KCNJ5/GIRK4 or KCNJ6/GIRK2 to form a G-protein activated heteromultimer pore-forming unit. The resulting inward current is much larger. Associates with KCNJ9/GIRK3 to form a G-protein activated heteromultimer pore-forming unit.

It is found in the membrane. It catalyses the reaction K(+)(in) = K(+)(out). Its activity is regulated as follows. Heteromultimer composed of KCNJ3/GIRK1 and KCNJ5/GIRK4 is activated by phosphatidylinositol 4,5 biphosphate (PtdIns(4,5)P2). In terms of biological role, inward rectifier potassium channels are characterized by a greater tendency to allow potassium to flow into the cell rather than out of it. Their voltage dependence is regulated by the concentration of extracellular potassium; as external potassium is raised, the voltage range of the channel opening shifts to more positive voltages. The inward rectification is mainly due to the blockage of outward current by internal magnesium. This potassium channel is controlled by G proteins. This receptor plays a crucial role in regulating the heartbeat. Forms a functional channel in association with KCNJ9/GIRK3. In Rattus norvegicus (Rat), this protein is G protein-activated inward rectifier potassium channel 1 (Kcnj3).